The primary structure comprises 160 residues: Cytochrome b6-f complex subunit 4 (160 aa).

3 helical membrane passes run 36–56 (LLYIFPVVILGTIACVVGLAV), 95–115 (LLGIALQTLIPLGLMILPFIE), and 128–148 (IAMSLFLFGTFLTIYLGIGAC).

It belongs to the cytochrome b family. PetD subfamily. As to quaternary structure, the 4 large subunits of the cytochrome b6-f complex are cytochrome b6, subunit IV (17 kDa polypeptide, PetD), cytochrome f and the Rieske protein, while the 4 small subunits are PetG, PetL, PetM and PetN. The complex functions as a dimer.

It is found in the cellular thylakoid membrane. Component of the cytochrome b6-f complex, which mediates electron transfer between photosystem II (PSII) and photosystem I (PSI), cyclic electron flow around PSI, and state transitions. The polypeptide is Cytochrome b6-f complex subunit 4 (Prochlorococcus marinus (strain MIT 9312)).